Consider the following 48-residue polypeptide: Small polypeptide DEVIL 19 (48 aa).

A required for DVL/RTFL small polypeptide activity region spans residues 13–44 (AFTSKCVSLVKEQRARLYILRRCATMLCCWYI). A helical transmembrane segment spans residues 25–42 (QRARLYILRRCATMLCCW).

The protein belongs to the DVL/RTFL small polypeptides family.

It localises to the cell membrane. In terms of biological role, small polypeptide acting as a regulatory molecule which coordinates cellular responses required for differentiation, growth and development, probably by restricting polar cell proliferation in lateral organs and coordinating socket cell recruitment and differentiation at trichome sites. This chain is Small polypeptide DEVIL 19, found in Arabidopsis thaliana (Mouse-ear cress).